The primary structure comprises 146 residues: Endothelial differentiation-related factor 1 homolog (146 aa).

A disordered region spans residues 13–53 (RKKGSAAQSKSKQAVTAAQRKGEAVETSKKWAAGQNKQHVV). Over residues 17–31 (SAAQSKSKQAVTAAQ) the composition is skewed to low complexity. Residues 32 to 41 (RKGEAVETSK) show a composition bias toward basic and acidic residues. An HTH cro/C1-type domain is found at 80–134 (IQQGRQNKGLTQKDLATKINEKPQIIAEYECGKAIPNNQVMGKIERAIGLKLRGK). The segment at residues 91 to 110 (QKDLATKINEKPQIIAEYEC) is a DNA-binding region (H-T-H motif).

The protein localises to the nucleus. Functionally, probable transcriptional coactivator. The chain is Endothelial differentiation-related factor 1 homolog (edf1) from Danio rerio (Zebrafish).